The sequence spans 123 residues: Large ribosomal subunit protein uL14c (123 aa).

This sequence belongs to the universal ribosomal protein uL14 family. As to quaternary structure, part of the 50S ribosomal subunit.

It localises to the plastid. The protein localises to the chloroplast. Binds to 23S rRNA. The chain is Large ribosomal subunit protein uL14c from Lolium perenne (Perennial ryegrass).